The primary structure comprises 1352 residues: Spike glycoprotein (1352 aa).

Positions 1-12 (MTLLMCLLMSLL) are cleaved as a signal peptide. Residues 13–1297 (IFVRGCDSQF…GNYTYYNKWP (1285 aa)) lie on the Extracellular side of the membrane. In terms of domain architecture, BetaCoV S1-NTD spans 21–356 (QFVDMSPASN…DDLSQLHCSY (336 aa)). N-linked (GlcNAc...) asparagine; by host glycans are attached at residues Asn-30, Asn-71, Asn-111, Asn-132, Asn-162, Asn-172, Asn-227, and Asn-241. 2 disulfide bridges follow: Cys-191/Cys-242 and Cys-344/Cys-354. Residue Asn-384 is glycosylated (N-linked (GlcNAc...) asparagine; by host). Positions 386-592 (TECDFSPMLT…GTGTDSVCPM (207 aa)) constitute a BetaCoV S1-CTD domain. Cys-388 and Cys-412 form a disulfide bridge. N-linked (GlcNAc...) asparagine; by host glycosylation is present at Asn-415. 2 cysteine pairs are disulfide-bonded: Cys-430–Cys-483 and Cys-442–Cys-590. Residues Asn-492, Asn-624, Asn-723, Asn-762, Asn-773, Asn-784, and Asn-869 are each glycosylated (N-linked (GlcNAc...) asparagine; by host). Fusion peptide regions lie at residues 887–908 (SAIEDLLFDKVTIADPGYMQGY) and 906–928 (QGYDDCMKQGPQSARDLICAQYV). Cys-911 and Cys-924 are joined by a disulfide. A heptad repeat 1 region spans residues 993–1043 (QKLIANKFNQALGAMQTGFTTSNLAFSKVQDAVNANAQALSKLASELSNTF). The stretch at 1022–1066 (QDAVNANAQALSKLASELSNTFGAISSSISDILARLDTVEQDAQI) forms a coiled coil. N-linked (GlcNAc...) asparagine; by host glycans are attached at residues Asn-1144, Asn-1147, Asn-1174, Asn-1226, Asn-1242, Asn-1257, Asn-1278, and Asn-1289. The interval 1247 to 1286 (GPNFAEISKINTTLLDLSDEMAMLQEVVKQLNDSYIDLKE) is heptad repeat 2. The stretch at 1259 to 1287 (TLLDLSDEMAMLQEVVKQLNDSYIDLKEL) forms a coiled coil. Residues 1298–1318 (WYVWLGFIAGLVALLLCVFFL) form a helical membrane-spanning segment. The Cytoplasmic portion of the chain corresponds to 1319–1352 (LCCTGCGTSCLGKMKCKNCCDSYEEYDVEKIHVH). Residues 1350-1352 (HVH) carry the KxHxx motif.

Belongs to the betacoronaviruses spike protein family. Homotrimer; each monomer consists of a S1 and a S2 subunit. The resulting peplomers protrude from the virus surface as spikes. In terms of processing, specific enzymatic cleavages in vivo yield mature proteins. The precursor is processed into S1 and S2 by host cell furin or another cellular protease to yield the mature S1 and S2 proteins. Additionally, a second cleavage leads to the release of a fusion peptide after viral attachment to host cell receptor. Post-translationally, the cytoplasmic Cys-rich domain is palmitoylated. Spike glycoprotein is digested within host endosomes.

The protein resides in the virion membrane. Its subcellular location is the host endoplasmic reticulum-Golgi intermediate compartment membrane. The protein localises to the host cell membrane. In terms of biological role, attaches the virion to the cell membrane by interacting with host receptor, initiating the infection. Its function is as follows. Mediates fusion of the virion and cellular membranes by acting as a class I viral fusion protein. Under the current model, the protein has at least three conformational states: pre-fusion native state, pre-hairpin intermediate state, and post-fusion hairpin state. During viral and target cell membrane fusion, the coiled coil regions (heptad repeats) assume a trimer-of-hairpins structure, positioning the fusion peptide in close proximity to the C-terminal region of the ectodomain. The formation of this structure appears to drive apposition and subsequent fusion of viral and target cell membranes. Functionally, acts as a viral fusion peptide which is unmasked following S2 cleavage occurring upon virus endocytosis. This is Spike glycoprotein from Bat coronavirus HKU4 (BtCoV).